Reading from the N-terminus, the 167-residue chain is Small ribosomal subunit protein uS5 (167 aa).

Positions 11–74 constitute an S5 DRBM domain; that stretch reads LQEKLIAVNR…EKARRAMINV (64 aa).

Belongs to the universal ribosomal protein uS5 family. As to quaternary structure, part of the 30S ribosomal subunit. Contacts proteins S4 and S8.

With S4 and S12 plays an important role in translational accuracy. In terms of biological role, located at the back of the 30S subunit body where it stabilizes the conformation of the head with respect to the body. The protein is Small ribosomal subunit protein uS5 of Yersinia pseudotuberculosis serotype O:1b (strain IP 31758).